Here is a 550-residue protein sequence, read N- to C-terminus: Metal transporter Nramp4 (550 aa).

Basic and acidic residues predominate over residues 1–13 (MEEGAKIGREHEQ). A disordered region spans residues 1–37 (MEEGAKIGREHEQQQQQHGRVNGSGRVAAVGGGSGGG). Over residues 14–29 (QQQQHGRVNGSGRVAA) the composition is skewed to low complexity. 12 helical membrane-spanning segments follow: residues 72-92 (FLAH…PSNL), 105-125 (SLLW…SLAA), 151-171 (LWLL…LGTA), 177-197 (LLHI…FLIL), 207-227 (MEFT…MELG), 255-275 (VAMF…SLVL), 292-312 (FFLL…VAIV), 354-374 (VYGV…SYAG), 388-408 (IIYL…CSIG), 416-436 (IINI…IPLI), 457-477 (IAWI…CTSF), and 492-512 (AIIS…LIYL).

The protein belongs to the NRAMP (TC 2.A.55) family.

The protein resides in the membrane. In terms of biological role, probable metal transporter. The sequence is that of Metal transporter Nramp4 (NRAMP4) from Oryza sativa subsp. japonica (Rice).